The primary structure comprises 224 residues: 7-cyano-7-deazaguanine synthase (224 aa).

Leucine 10–alanine 20 contributes to the ATP binding site. Zn(2+)-binding residues include cysteine 189, cysteine 199, cysteine 202, and cysteine 205.

It belongs to the QueC family. Zn(2+) serves as cofactor.

It catalyses the reaction 7-carboxy-7-deazaguanine + NH4(+) + ATP = 7-cyano-7-deazaguanine + ADP + phosphate + H2O + H(+). It functions in the pathway purine metabolism; 7-cyano-7-deazaguanine biosynthesis. Its function is as follows. Catalyzes the ATP-dependent conversion of 7-carboxy-7-deazaguanine (CDG) to 7-cyano-7-deazaguanine (preQ(0)). This is 7-cyano-7-deazaguanine synthase from Azotobacter vinelandii (strain DJ / ATCC BAA-1303).